We begin with the raw amino-acid sequence, 429 residues long: MRVSVPGPAAAAAPAAGREPSTPGGGSGGGGAVAAASGAAVPGSVQLALSVLHALLYAALFAFAYLQLWRLLLYRERRLSYQSLCLFLCLLWAALRTTLFSAAFSLSGSLPLLRPPAHLHFFPHWLLYCFPSCLQFSTLCLLNLYLAEVICKVRCATELDRHKILLHLGFIMASLLFLVVNLTCAMLVHGDVPENQLKWTVFVRALINDSLFILCAISLVCYICKITKMSSANVYLESKGMSLCQTVVVGSVVILLYSSRACYNLVVVTISQDTLESPFNYGWDNLSDKAHVEDISGEEYIVFGMVLFLWEHVPAWSVVLFFRAQRLNQNLAPAGMINSHSYSSRAYFFDNPRRYDSDDDLPRLGSSREGSLPNSQSLGWYGTMTGCGSSSYTVTPHLNGPMTDTAPLLFTCSNLDLNNHHSLYVTPQN.

Low complexity predominate over residues Met-1–Gly-17. Positions Met-1–Gly-29 are disordered. Residues Met-1–Ala-48 are Lumenal-facing. Residues Leu-49–Trp-69 traverse the membrane as a helical segment. Topologically, residues Arg-70–Ser-83 are cytoplasmic. Residues Leu-84–Phe-104 traverse the membrane as a helical segment. Over Ser-105–His-120 the chain is Lumenal. Residues Phe-121 to Leu-141 form a helical membrane-spanning segment. Topologically, residues Leu-142–His-167 are cytoplasmic. Residues Leu-168–Val-188 traverse the membrane as a helical segment. At His-189–Ala-205 the chain is on the lumenal side. A helical membrane pass occupies residues Leu-206 to Ile-226. Topologically, residues Thr-227–Thr-246 are cytoplasmic. Residues Val-247 to Val-267 traverse the membrane as a helical segment. Residues Val-268 to Tyr-300 are Lumenal-facing. Residue Asn-285 is glycosylated (N-linked (GlcNAc...) asparagine). Residues Ile-301–Phe-321 traverse the membrane as a helical segment. The Cytoplasmic segment spans residues Phe-322 to Asn-429.

Belongs to the GPR137 family.

It localises to the lysosome membrane. Its function is as follows. Lysosomal integral membrane protein that may regulate MTORC1 complex translocation to lysosomes. The chain is Integral membrane protein GPR137C (GPR137C) from Homo sapiens (Human).